A 261-amino-acid chain; its full sequence is Monensin polyketide synthase putative ketoacyl reductase (261 aa).

NAD(+) is bound at residue 10-34; it reads LVTGATSGIGLATARLLAAQGHLVF. Residue serine 144 participates in substrate binding. The active-site Proton acceptor is the tyrosine 157.

Belongs to the short-chain dehydrogenases/reductases (SDR) family.

It participates in antifungal biosynthesis; monensin biosynthesis. In Streptomyces virginiae (Streptomyces cinnamonensis), this protein is Monensin polyketide synthase putative ketoacyl reductase.